A 1129-amino-acid chain; its full sequence is Phytochrome A type 4 (1129 aa).

Residues 1–21 (MSSSRPASSSSSRNRQSSRAR) show a composition bias toward low complexity. The interval 1–24 (MSSSRPASSSSSRNRQSSRARVLA) is disordered. A GAF domain is found at 217–402 (SMEVLCNTVV…VFAVHVNREF (186 aa)). Cys322 is a phytochromobilin binding site. 2 consecutive PAS domains span residues 618–688 (VTSE…LQGK) and 748–822 (VEGD…VSLC). The Histidine kinase domain occupies 902 to 1122 (YMRHAINNPL…TFILTAELAS (221 aa)).

This sequence belongs to the phytochrome family. Homodimer. Post-translationally, contains one covalently linked phytochromobilin chromophore.

In terms of biological role, regulatory photoreceptor which exists in two forms that are reversibly interconvertible by light: the Pr form that absorbs maximally in the red region of the spectrum and the Pfr form that absorbs maximally in the far-red region. Photoconversion of Pr to Pfr induces an array of morphogenic responses, whereas reconversion of Pfr to Pr cancels the induction of those responses. Pfr controls the expression of a number of nuclear genes including those encoding the small subunit of ribulose-bisphosphate carboxylase, chlorophyll A/B binding protein, protochlorophyllide reductase, rRNA, etc. It also controls the expression of its own gene(s) in a negative feedback fashion. In Avena sativa (Oat), this protein is Phytochrome A type 4 (PHYA4).